We begin with the raw amino-acid sequence, 549 residues long: Vacuolar fusion protein MON1 homolog A (549 aa).

Disordered regions lie at residues 1-90 (MAAD…EQIS) and 109-137 (EEMR…GKEE). Residues 110–119 (EMRQSQEGKL) are compositionally biased toward basic and acidic residues.

This sequence belongs to the MON1/SAND family.

Plays an important role in membrane trafficking through the secretory apparatus. Not involved in endocytic trafficking to lysosomes. In Gallus gallus (Chicken), this protein is Vacuolar fusion protein MON1 homolog A (MON1A).